A 141-amino-acid chain; its full sequence is Sporulation-specific cell division protein SsgB (141 aa).

Belongs to the SsgA family. As to quaternary structure, interacts with SsgA. Interacts with FtsZ (via N-terminus).

It is found in the cell septum. Functionally, involved in sporulation-specific cell division. Required for early stages of sporulation. Important in the process of growth cessation prior to sporulation-specific cell division. Recruits cell division protein FtsZ to the future septum sites and tethers the contractile ring structure (Z ring) to the cytoplasmic membrane during sporulation. Stimulates polymerization and filament length of FtsZ in vitro. This Saccharopolyspora erythraea (strain ATCC 11635 / DSM 40517 / JCM 4748 / NBRC 13426 / NCIMB 8594 / NRRL 2338) protein is Sporulation-specific cell division protein SsgB.